The primary structure comprises 240 residues: MNFKKGEVLFFNKPLGWTSFKVVGHVRYHICRRIGVKKLKVGHAGTLDPLATGVMILCTGKATKRIEEFQYHTKEYVATLRLGATTPSYDLEHEIDATYPTGHITRELVEETLTHFLGAIEQVPPAFSACMVDGKRAYELARKGEEVELKAKQLVIDEIELLECRLDDPEPTIRIRVVCSKGTYIRALARDIGEALQSGAHLTELIRTRVGDVRLEDCLDPEHFKEWIDRQEIENDEDNN.

Asp-48 serves as the catalytic Nucleophile.

Belongs to the pseudouridine synthase TruB family. Type 1 subfamily.

The enzyme catalyses uridine(55) in tRNA = pseudouridine(55) in tRNA. Functionally, responsible for synthesis of pseudouridine from uracil-55 in the psi GC loop of transfer RNAs. This Bacteroides thetaiotaomicron (strain ATCC 29148 / DSM 2079 / JCM 5827 / CCUG 10774 / NCTC 10582 / VPI-5482 / E50) protein is tRNA pseudouridine synthase B.